A 374-amino-acid polypeptide reads, in one-letter code: Polar flagellin E (374 aa).

The stretch at 102-126 (SHEQDDRKSLQQEVIALQDELDRVA) forms a coiled coil.

It belongs to the bacterial flagellin family. Heteromer of multiple flagellin subunits including FlaA, FlaB/D, FlaC, FlaE and FlaF.

Its subcellular location is the secreted. It is found in the bacterial flagellum. Its function is as follows. Flagellin is the subunit protein which polymerizes to form the filaments of bacterial flagella. This chain is Polar flagellin E (flaE), found in Vibrio parahaemolyticus serotype O3:K6 (strain RIMD 2210633).